We begin with the raw amino-acid sequence, 583 residues long: Proteasome-associated ATPase (583 aa).

Over residues 1 to 19 the composition is skewed to polar residues; it reads METPNQDSGRTPTEQSAAN. The disordered stretch occupies residues 1 to 22; that stretch reads METPNQDSGRTPTEQSAANDLS. A coiled-coil region spans residues 24 to 75; that stretch reads ADRQVNILRDKLRHIDRQLAAATQNNTKLVSMLETAKAEILRLKNALDQEGQ. 271 to 276 contributes to the ATP binding site; the sequence is GCGKTL. Positions 582-583 are docks into pockets in the proteasome alpha-ring; it reads YL.

It belongs to the AAA ATPase family. Homohexamer. Assembles into a hexameric ring structure that caps the 20S proteasome core. Strongly interacts with the prokaryotic ubiquitin-like protein Pup through a hydrophobic interface; the interacting region of ARC lies in its N-terminal coiled-coil domain. There is one Pup binding site per ARC hexamer ring. Upon ATP-binding, the C-terminus of ARC interacts with the alpha-rings of the proteasome core, possibly by binding to the intersubunit pockets.

The protein operates within protein degradation; proteasomal Pup-dependent pathway. Its function is as follows. ATPase which is responsible for recognizing, binding, unfolding and translocation of pupylated proteins into the bacterial 20S proteasome core particle. May be essential for opening the gate of the 20S proteasome via an interaction with its C-terminus, thereby allowing substrate entry and access to the site of proteolysis. Thus, the C-termini of the proteasomal ATPase may function like a 'key in a lock' to induce gate opening and therefore regulate proteolysis. The protein is Proteasome-associated ATPase of Pseudarthrobacter chlorophenolicus (strain ATCC 700700 / DSM 12829 / CIP 107037 / JCM 12360 / KCTC 9906 / NCIMB 13794 / A6) (Arthrobacter chlorophenolicus).